The primary structure comprises 122 residues: Flagellar hook-basal body complex protein FliE (122 aa).

This sequence belongs to the FliE family.

The protein localises to the bacterial flagellum basal body. The sequence is that of Flagellar hook-basal body complex protein FliE from Marinobacter nauticus (strain ATCC 700491 / DSM 11845 / VT8) (Marinobacter aquaeolei).